Consider the following 304-residue polypeptide: Glycine--tRNA ligase alpha subunit (304 aa).

The protein belongs to the class-II aminoacyl-tRNA synthetase family. As to quaternary structure, tetramer of two alpha and two beta subunits.

It localises to the cytoplasm. The enzyme catalyses tRNA(Gly) + glycine + ATP = glycyl-tRNA(Gly) + AMP + diphosphate. The polypeptide is Glycine--tRNA ligase alpha subunit (Pectobacterium carotovorum subsp. carotovorum (strain PC1)).